The following is a 338-amino-acid chain: MTVKIGINGFGRIGRLAFRRIMDLGEETKDIEVVAINDLTTPAMLAHLLKYDSTHGTFDHEVSATEDSLVVDGKKYRVYAEPQAQNIPWVKNDGVDFVLECTGFYTSKAKSQAHLDAGAKRVLISAPAGNDLKTIVYSVNQDTLTADDTIVSAGSCTTNSLAPMANALNKEFGIQVGTMTTIHAYTATQKVLDGPDRGNNFRNARAAAENIIPHSTGAAKAIGLVLPELNGKLDGHAQRVPVKDGSETELVTILDKKVTAEEVNAAMKKYESPSFAYNADQIVSTDVLGMTAGSIFDPTQTQVITAGDKQLVKTVAWYDNEYSFTCQMVRTLLHFATL.

Residues 12-13 (RI), Asp38, and Ser125 each bind NAD(+). D-glyceraldehyde 3-phosphate is bound by residues 155–157 (SCT), Thr186, 216–217 (TG), and Arg239. Cys156 acts as the Nucleophile in catalysis. Asn320 lines the NAD(+) pocket.

Belongs to the glyceraldehyde-3-phosphate dehydrogenase family. As to quaternary structure, homotetramer.

It is found in the cytoplasm. The enzyme catalyses D-glyceraldehyde 3-phosphate + phosphate + NAD(+) = (2R)-3-phospho-glyceroyl phosphate + NADH + H(+). Its pathway is carbohydrate degradation; glycolysis; pyruvate from D-glyceraldehyde 3-phosphate: step 1/5. Functionally, catalyzes the oxidative phosphorylation of glyceraldehyde 3-phosphate (G3P) to 1,3-bisphosphoglycerate (BPG) using the cofactor NAD. The first reaction step involves the formation of a hemiacetal intermediate between G3P and a cysteine residue, and this hemiacetal intermediate is then oxidized to a thioester, with concomitant reduction of NAD to NADH. The reduced NADH is then exchanged with the second NAD, and the thioester is attacked by a nucleophilic inorganic phosphate to produce BPG. This Lactobacillus delbrueckii subsp. bulgaricus protein is Glyceraldehyde-3-phosphate dehydrogenase (gap).